Consider the following 283-residue polypeptide: Protein/nucleic acid deglycase HchA (283 aa).

Zn(2+)-binding residues include histidine 86, glutamate 91, and histidine 123. Residue cysteine 185 is the Nucleophile of the active site.

The protein belongs to the peptidase C56 family. HchA subfamily. Homodimer.

The protein resides in the cytoplasm. The catalysed reaction is N(omega)-(1-hydroxy-2-oxopropyl)-L-arginyl-[protein] + H2O = lactate + L-arginyl-[protein] + H(+). The enzyme catalyses N(6)-(1-hydroxy-2-oxopropyl)-L-lysyl-[protein] + H2O = lactate + L-lysyl-[protein] + H(+). It catalyses the reaction S-(1-hydroxy-2-oxopropyl)-L-cysteinyl-[protein] + H2O = lactate + L-cysteinyl-[protein] + H(+). It carries out the reaction N(omega)-(1-hydroxy-2-oxoethyl)-L-arginyl-[protein] + H2O = L-arginyl-[protein] + glycolate + H(+). The catalysed reaction is N(6)-(1-hydroxy-2-oxoethyl)-L-lysyl-[protein] + H2O = glycolate + L-lysyl-[protein] + H(+). The enzyme catalyses S-(1-hydroxy-2-oxoethyl)-L-cysteinyl-[protein] + H2O = glycolate + L-cysteinyl-[protein] + H(+). It catalyses the reaction N(2)-(1-hydroxy-2-oxopropyl)-dGTP + H2O = lactate + dGTP + H(+). It carries out the reaction N(2)-(1-hydroxy-2-oxopropyl)-GTP + H2O = lactate + GTP + H(+). The catalysed reaction is N(2)-(1-hydroxy-2-oxopropyl)-GDP + H2O = lactate + GDP + H(+). The enzyme catalyses N(2)-(1-hydroxy-2-oxopropyl)-GMP + H2O = lactate + GMP + H(+). It catalyses the reaction N(2)-(1-hydroxy-2-oxoethyl)-dGTP + H2O = dGTP + glycolate + H(+). It carries out the reaction N(2)-(1-hydroxy-2-oxoethyl)-GTP + H2O = glycolate + GTP + H(+). The catalysed reaction is N(2)-(1-hydroxy-2-oxoethyl)-GDP + H2O = glycolate + GDP + H(+). The enzyme catalyses N(2)-(1-hydroxy-2-oxoethyl)-GMP + H2O = glycolate + GMP + H(+). It catalyses the reaction an N(2)-(1-hydroxy-2-oxopropyl)-guanosine in RNA + H2O = a guanosine in RNA + lactate + H(+). It carries out the reaction an N(2)-(1-hydroxy-2-oxopropyl)-2'-deoxyguanosine in DNA + H2O = a 2'-deoxyguanosine in DNA + lactate + H(+). The catalysed reaction is an N(2)-(1-hydroxy-2-oxoethyl)-guanosine in RNA + H2O = a guanosine in RNA + glycolate + H(+). The enzyme catalyses an N(2)-(1-hydroxy-2-oxoethyl)-2'-deoxyguanosine in DNA + H2O = a 2'-deoxyguanosine in DNA + glycolate + H(+). Functionally, protein and nucleotide deglycase that catalyzes the deglycation of the Maillard adducts formed between amino groups of proteins or nucleotides and reactive carbonyl groups of glyoxals. Thus, functions as a protein deglycase that repairs methylglyoxal- and glyoxal-glycated proteins, and releases repaired proteins and lactate or glycolate, respectively. Deglycates cysteine, arginine and lysine residues in proteins, and thus reactivates these proteins by reversing glycation by glyoxals. Acts on early glycation intermediates (hemithioacetals and aminocarbinols), preventing the formation of Schiff bases and advanced glycation endproducts (AGE). Also functions as a nucleotide deglycase able to repair glycated guanine in the free nucleotide pool (GTP, GDP, GMP, dGTP) and in DNA and RNA. Is thus involved in a major nucleotide repair system named guanine glycation repair (GG repair), dedicated to reversing methylglyoxal and glyoxal damage via nucleotide sanitization and direct nucleic acid repair. Plays an important role in protecting cells from carbonyl stress. The protein is Protein/nucleic acid deglycase HchA of Escherichia coli O45:K1 (strain S88 / ExPEC).